The primary structure comprises 125 residues: Small ribosomal subunit protein uS13 (125 aa).

Residues 93-125 are disordered; sequence RRGLPVRGQRTKTNARTRKGPKRTVAGKKKAGR.

The protein belongs to the universal ribosomal protein uS13 family. As to quaternary structure, part of the 30S ribosomal subunit. Forms a loose heterodimer with protein S19. Forms two bridges to the 50S subunit in the 70S ribosome.

Its function is as follows. Located at the top of the head of the 30S subunit, it contacts several helices of the 16S rRNA. In the 70S ribosome it contacts the 23S rRNA (bridge B1a) and protein L5 of the 50S subunit (bridge B1b), connecting the 2 subunits; these bridges are implicated in subunit movement. Contacts the tRNAs in the A and P-sites. This chain is Small ribosomal subunit protein uS13, found in Renibacterium salmoninarum (strain ATCC 33209 / DSM 20767 / JCM 11484 / NBRC 15589 / NCIMB 2235).